A 686-amino-acid polypeptide reads, in one-letter code: LEAF RUST 10 DISEASE-RESISTANCE LOCUS RECEPTOR-LIKE PROTEIN KINASE-like 1.3 (686 aa).

A signal peptide spans 1 to 33 (MFSPVLFRFSKPNSFLVLLFFLSYIHFLPCAQS). Residues 34-264 (QREPCDTLFR…AGLSKKGKIG (231 aa)) lie on the Extracellular side of the membrane. N-linked (GlcNAc...) asparagine glycans are attached at residues Asn-76, Asn-93, Asn-175, Asn-190, and Asn-236. Residues 265-285 (IGFASGFLGATLIGGCLLCIF) form a helical membrane-spanning segment. Topologically, residues 286–686 (IRRRKKLATQ…SSSNTTASSF (401 aa)) are cytoplasmic. The Protein kinase domain maps to 358–633 (ENFSKELGDG…DEIVEVLRVI (276 aa)). Residues 364–372 (LGDGGFGTV) and Lys-386 each bind ATP. At Tyr-432 the chain carries Phosphotyrosine. The Proton acceptor role is filled by Asp-482. Phosphoserine is present on Ser-515. Phosphothreonine occurs at positions 516 and 521. Tyr-529 bears the Phosphotyrosine mark. Residues 657 to 686 (GLLKHGVPPPLSPETDKTTASSSNTTASSF) form a disordered region. Over residues 674–686 (TTASSSNTTASSF) the composition is skewed to low complexity.

It belongs to the protein kinase superfamily. Ser/Thr protein kinase family.

The protein resides in the cell membrane. The catalysed reaction is L-seryl-[protein] + ATP = O-phospho-L-seryl-[protein] + ADP + H(+). It carries out the reaction L-threonyl-[protein] + ATP = O-phospho-L-threonyl-[protein] + ADP + H(+). The protein is LEAF RUST 10 DISEASE-RESISTANCE LOCUS RECEPTOR-LIKE PROTEIN KINASE-like 1.3 of Arabidopsis thaliana (Mouse-ear cress).